A 474-amino-acid polypeptide reads, in one-letter code: MTKKLHIKTWGCQMNEYDSSKMADLLDATHGYQLTDVAEEADVLLLNTCSIREKAQEKVFHQLGRWRLLKEKNPDLIIGVGGCVASQEGEHIRQRAHYVDIIFGPQTSHRLPEMINSVRGDRSPVVDISFPEIEKFDRLPEPRAEGPTAFVSIMEGCNKYCTYCVVPYTRGEEVSRPSDDILFEIAQLAAQGVREVNLLGQNVNAWRGENYDGTTGTFADLLRLVAAIDGIDRIRFTTSHPIEFTDDIIEVYRDTPELVSFLHLPVQSGSDRVLNLMGRTHTALEYKAIIRKLRAARPDIQISSDFIVGFPGETTDDFEKTMKLIADVNFDMSYSFIFSARPGTPAADMVDDVPEEEKKQRLYILQERINQQAMAWSRRMLGTTQRILVEGTSRKNIMELSGRTENNRVVNFEGTPEMIGKFVDVEITDVYPNSLRGKVVRTEDEMGLRVAETPESVIARTRKENELGVGFYQP.

Residues 3-120 (KKLHIKTWGC…LPEMINSVRG (118 aa)) form the MTTase N-terminal domain. Residues Cys-12, Cys-49, Cys-83, Cys-157, Cys-161, and Cys-164 each contribute to the [4Fe-4S] cluster site. The region spanning 143 to 375 (RAEGPTAFVS…QERINQQAMA (233 aa)) is the Radical SAM core domain. Residues 378 to 441 (RRMLGTTQRI…PNSLRGKVVR (64 aa)) enclose the TRAM domain.

The protein belongs to the methylthiotransferase family. MiaB subfamily. As to quaternary structure, monomer. [4Fe-4S] cluster serves as cofactor.

Its subcellular location is the cytoplasm. It carries out the reaction N(6)-dimethylallyladenosine(37) in tRNA + (sulfur carrier)-SH + AH2 + 2 S-adenosyl-L-methionine = 2-methylsulfanyl-N(6)-dimethylallyladenosine(37) in tRNA + (sulfur carrier)-H + 5'-deoxyadenosine + L-methionine + A + S-adenosyl-L-homocysteine + 2 H(+). Catalyzes the methylthiolation of N6-(dimethylallyl)adenosine (i(6)A), leading to the formation of 2-methylthio-N6-(dimethylallyl)adenosine (ms(2)i(6)A) at position 37 in tRNAs that read codons beginning with uridine. This chain is tRNA-2-methylthio-N(6)-dimethylallyladenosine synthase, found in Salmonella paratyphi A (strain ATCC 9150 / SARB42).